The primary structure comprises 160 residues: Class II hydrophobin 8 (160 aa).

Disulfide bonds link cysteine 92/cysteine 141, cysteine 102/cysteine 132, cysteine 103/cysteine 115, and cysteine 142/cysteine 153.

This sequence belongs to the cerato-ulmin hydrophobin family. In terms of assembly, homodimer. Homodimers further self-assemble to form highly ordered films at water-air interfaces through intermolecular interactions.

It localises to the secreted. Its subcellular location is the cell wall. Functionally, aerial growth, conidiation, and dispersal of filamentous fungi in the environment rely upon a capability of their secreting small amphipathic proteins called hydrophobins (HPBs) with low sequence identity. Class I can self-assemble into an outermost layer of rodlet bundles on aerial cell surfaces, conferring cellular hydrophobicity that supports fungal growth, development and dispersal; whereas Class II form highly ordered films at water-air interfaces through intermolecular interactions but contribute nothing to the rodlet structure. This Trichoderma asperellum (strain ATCC 204424 / CBS 433.97 / NBRC 101777) protein is Class II hydrophobin 8.